We begin with the raw amino-acid sequence, 936 residues long: MGNHVPAGFFTQANSLFRKNLTYQKRNIWSNVRLIVIPFYLCVLLVGIQVLFDTQVNNSADNRCGCRCIDKNGDGKCGQKSCGLQYSSQNQAFFCAFPNPPPLLPLLHIPRPETRSSDRDRDSCRQTGSCPVTILLTGNNHSLGTTISRNLLSTSFAMNSSDLFLRNLAYNVLGTTSKADYTNYLDPGILSDLPIFNVQPRCTPDTTTFSFPFRQSPLEFHKEVRCVEGLNLWRNNSIEISNEIFKGYRQGNLEEIINEVAAAYDLMDTDINNFNVTIWYNSTYKGDLRDRRVKYVRVPRSVNLVSNAYLEFLQGSGTKMLFDFVKEMPKQETRLRLEMASLIGPIFFTWVILLLFPVMLTSLVYEKQQHLRIIMKMHGLGDGPYWMITYAYFLAISIVYIICLMIFGSAIGLKFFRFNDYSIQFIFYFLCINLQISIAFLVSSAFSKIETASVAAYLYVFGSGLLGAFLFQFLLEGLSFPRSWIYIMELYPGFSLYRGLYEFSQYAFKRNLNGSGGMKWKDFNDSAMEEIFYIIIVEWFVALIAAYYTDKISSSGIDPFFFLKNQNPFKKSPSPYGLQRQVSAIAIEMEKLDVAHERVKVEQLMLETSTGHAIVCDNLKKVYPCRDGNPQKMAVRGLSLAVPSGECFGMLGPNGAGKTSFINMMTGLMKPTSGAAFVHGLDICKDMDIVYTSIGVCPQHDLLWETLTGREHLLFYGRLKNLKGSDLDQAVEESLKSVNLFRGGVADKPAGKYSGGMKRRLSVAISLIGSPKVVYMDEPSTGLDPASRRSLWTAIKRAKNHTAIILTTHSMEEAEFLCDRLGIFVDGRLQCVGNPKELKARYGGSYVLTMTTPSEHEKDVEMLVQDVSPNAKKIYHIAGTQKFEIPKEEVRISEVFQAVEKAKDNFRVFAWGLADTTLEDVFIKVARTAQASNVFS.

7 helical membrane passes run 34–54 (LIVI…LFDT), 340–360 (ASLI…PVML), 393–413 (FLAI…AIGL), 422–442 (SIQF…AFLV), 454–474 (VAAY…FQFL), 484–501 (WIYI…RGLY), and 527–547 (AMEE…IAAY). The ABC transporter domain occupies 614–851 (IVCDNLKKVY…YGGSYVLTMT (238 aa)). 652-659 (GPNGAGKT) is an ATP binding site.

This sequence belongs to the ABC transporter superfamily. ABCA family. CPR flippase (TC 3.A.1.211) subfamily.

The protein localises to the membrane. The polypeptide is ABC transporter A family member 5 (ABCA5) (Arabidopsis thaliana (Mouse-ear cress)).